Consider the following 153-residue polypeptide: DNA gyrase inhibitor 1 (153 aa).

This sequence belongs to the DNA gyrase inhibitor family. In terms of assembly, interacts with DNA gyrase.

It localises to the cytoplasm. Inhibits the supercoiling activity of DNA gyrase. Acts by inhibiting DNA gyrase at an early step, prior to (or at the step of) binding of DNA by the gyrase. It protects cells against toxins that target DNA gyrase, by inhibiting activity of these toxins and reducing the formation of lethal double-strand breaks in the cell. The protein is DNA gyrase inhibitor 1 of Dickeya dadantii (strain 3937) (Erwinia chrysanthemi (strain 3937)).